The sequence spans 338 residues: Oxygen-dependent coproporphyrinogen-III oxidase (338 aa).

Substrate is bound at residue serine 104. The a divalent metal cation site is built by histidine 108 and histidine 118. The active-site Proton donor is the histidine 118. A substrate-binding site is contributed by 120 to 122; the sequence is NYR. The a divalent metal cation site is built by histidine 152 and histidine 182. Residues 274 to 309 are important for dimerization; it reads YVEFNLVYDRGTIFGLQTNGRTESILMSLPPLVRWE.

It belongs to the aerobic coproporphyrinogen-III oxidase family. As to quaternary structure, homodimer. Requires a divalent metal cation as cofactor.

Its subcellular location is the cytoplasm. It catalyses the reaction coproporphyrinogen III + O2 + 2 H(+) = protoporphyrinogen IX + 2 CO2 + 2 H2O. It participates in porphyrin-containing compound metabolism; protoporphyrin-IX biosynthesis; protoporphyrinogen-IX from coproporphyrinogen-III (O2 route): step 1/1. Involved in the heme and chlorophyll biosynthesis. Catalyzes the aerobic oxidative decarboxylation of propionate groups of rings A and B of coproporphyrinogen-III to yield the vinyl groups in protoporphyrinogen-IX. The protein is Oxygen-dependent coproporphyrinogen-III oxidase of Thermosynechococcus vestitus (strain NIES-2133 / IAM M-273 / BP-1).